The chain runs to 840 residues: Lysine-specific demethylase JMJ27 (840 aa).

Residues 1–10 (MEKMRGKRIR) are compositionally biased toward basic residues. The disordered stretch occupies residues 1–52 (MEKMRGKRIRPRDSGELVEDGRSESERKTRKKENDVVSKGRIGRGRGRGEVS). A compositionally biased stretch (basic and acidic residues) spans 11 to 38 (PRDSGELVEDGRSESERKTRKKENDVVS). Zn(2+) contacts are provided by Cys80, Cys83, Cys95, Cys98, Cys104, Cys107, Cys124, and Cys127. Residues 80 to 127 (CHHCKILTSESDLIFCSKCNKKCYCFDCIKRSYSERTHEEVRAACPFC) form an RING-type; degenerate zinc finger. Residues 502 to 798 (PKSGILNLAT…ECLRLTQEFR (297 aa)) enclose the JmjC domain. Fe cation is bound by residues His546 and Asp548. Residues 594-678 (KEASELENKS…ETDGNTNERS (85 aa)) are disordered. Residues 595–620 (EASELENKSMKEVDESKKDLKDKAAN) show a composition bias toward basic and acidic residues. Residues 621-631 (EEQSNNSSRPS) show a composition bias toward polar residues. Basic and acidic residues predominate over residues 635–646 (EAEKVIISKEDN). Residues 647 to 659 (PTQPAVSTSVESI) show a composition bias toward polar residues. A compositionally biased stretch (basic and acidic residues) spans 660-678 (QEQKLDAPKETDGNTNERS). His766 serves as a coordination point for Fe cation.

Belongs to the JARID1 histone demethylase family. As to quaternary structure, interacts with RPN1A. Requires Fe(2+) as cofactor. As to expression, expressed in seedlings, inflorescences, flowers and siliques, and, at low levels, in roots, leaves (including vascular bundles) and stems. Particularly observed in stomatal guard cells.

It is found in the nucleus. Its subcellular location is the cytoplasm. The catalysed reaction is N(6),N(6)-dimethyl-L-lysyl(9)-[histone H3] + 2-oxoglutarate + O2 = N(6)-methyl-L-lysyl(9)-[histone H3] + formaldehyde + succinate + CO2. The enzyme catalyses N(6)-methyl-L-lysyl(9)-[histone H3] + 2-oxoglutarate + O2 = L-lysyl(9)-[histone H3] + formaldehyde + succinate + CO2. It catalyses the reaction N(6),N(6)-dimethyl-L-lysyl(9)-[histone H3] + 2 2-oxoglutarate + 2 O2 = L-lysyl(9)-[histone H3] + 2 formaldehyde + 2 succinate + 2 CO2. Functionally, histone demethylase that demethylates 'Lys-9' (H3K9me) of histone H3 with a specific activity for H3K9me1 and H3K9me2. No activity on H3K4, H3K27, H3K36, H3R2 and H4R3 methyl marks, but weak activity on H3K9me3. Involved in regulation of gene expression. Regulates flowering time by repressing the major flowering regulator CONSTANS (CO) and promoting FLOWERING LOCUS C (FLC). Exhibits a positive impact on abscisic acid- (ABA), hydrogen peroxide- (H(2)O(2)) and calcium- (Ca(2+)) induced stomatal closure. Promotes stomatal-closure-dependent drought-stress responses through its histone demethylase activity toward at least GOLS2 and RD20 loci, thus protecting them from silencing by removing H3K9me2 marks in drought conditions. Required for plant defenses leading to resistance against the virulent bacterial pathogen Pseudomonas syringae pv. tomato DC3000 (Pst DC3000) via a negative regulation of WRKY25 (a repressor of defense) and by triggering the expression of several pathogenesis-related (PR) proteins (e.g. PR1, PR3, PR4 and PR5). This is Lysine-specific demethylase JMJ27 from Arabidopsis thaliana (Mouse-ear cress).